The sequence spans 377 residues: Compound eye opsin BCRH2 (377 aa).

Residues Met1–Trp53 are Extracellular-facing. Asn3 carries N-linked (GlcNAc...) asparagine glycosylation. Residues His54–Leu78 form a helical membrane-spanning segment. At Phe79–Asn90 the chain is on the cytoplasmic side. The chain crosses the membrane as a helical span at residues Ile91–Cys115. The Extracellular portion of the chain corresponds to Phe116–Tyr131. Cysteines 128 and 205 form a disulfide. Residues Ala132–Phe151 traverse the membrane as a helical segment. The Cytoplasmic segment spans residues Asp152 to Lys170. The helical transmembrane segment at Ala171–Gly194 threads the bilayer. At Asn195–Ser218 the chain is on the extracellular side. The helical transmembrane segment at Tyr219–Ile246 threads the bilayer. Residues Phe247–Lys281 are Cytoplasmic-facing. A helical transmembrane segment spans residues Thr282–Val305. The Extracellular portion of the chain corresponds to Met306–Thr313. The helical transmembrane segment at Pro314–Ser338 threads the bilayer. Lys325 bears the N6-(retinylidene)lysine mark. The Cytoplasmic portion of the chain corresponds to His339 to Ala377.

Belongs to the G-protein coupled receptor 1 family. Opsin subfamily. Post-translationally, phosphorylated on some or all of the serine and threonine residues present in the C-terminal region. As to expression, expressed in all of the seven retinular cells (R1-R7) forming the main rhabdom in each ommatidium.

It localises to the membrane. Visual pigments are the light-absorbing molecules that mediate vision. They consist of an apoprotein, opsin, covalently linked to cis-retinal. This opsin produces visual pigments with maximal absorption in the blue-green region of the spectrum. The polypeptide is Compound eye opsin BCRH2 (Hemigrapsus sanguineus (Asian shore crab)).